The sequence spans 220 residues: Probable nicotinate-nucleotide adenylyltransferase (220 aa).

It belongs to the NadD family.

The catalysed reaction is nicotinate beta-D-ribonucleotide + ATP + H(+) = deamido-NAD(+) + diphosphate. The protein operates within cofactor biosynthesis; NAD(+) biosynthesis; deamido-NAD(+) from nicotinate D-ribonucleotide: step 1/1. Its function is as follows. Catalyzes the reversible adenylation of nicotinate mononucleotide (NaMN) to nicotinic acid adenine dinucleotide (NaAD). This chain is Probable nicotinate-nucleotide adenylyltransferase, found in Laribacter hongkongensis (strain HLHK9).